Reading from the N-terminus, the 557-residue chain is Urocanate hydratase (557 aa).

Residues 48–49, glutamine 126, 178–180, aspartate 198, arginine 203, 244–245, 265–269, 274–275, and tyrosine 323 each bind NAD(+); these read GG, GMG, NA, QTSAH, and YL. The active site involves cysteine 411. Glycine 493 contributes to the NAD(+) binding site.

The protein belongs to the urocanase family. It depends on NAD(+) as a cofactor.

It is found in the cytoplasm. The enzyme catalyses 4-imidazolone-5-propanoate = trans-urocanate + H2O. The protein operates within amino-acid degradation; L-histidine degradation into L-glutamate; N-formimidoyl-L-glutamate from L-histidine: step 2/3. Catalyzes the conversion of urocanate to 4-imidazolone-5-propionate. The protein is Urocanate hydratase of Beutenbergia cavernae (strain ATCC BAA-8 / DSM 12333 / CCUG 43141 / JCM 11478 / NBRC 16432 / NCIMB 13614 / HKI 0122).